We begin with the raw amino-acid sequence, 303 residues long: Elongation factor Ts (303 aa).

The segment at 80–83 is involved in Mg(2+) ion dislocation from EF-Tu; it reads TDFV.

This sequence belongs to the EF-Ts family.

Its subcellular location is the cytoplasm. Associates with the EF-Tu.GDP complex and induces the exchange of GDP to GTP. It remains bound to the aminoacyl-tRNA.EF-Tu.GTP complex up to the GTP hydrolysis stage on the ribosome. The polypeptide is Elongation factor Ts (Clostridium perfringens (strain SM101 / Type A)).